A 188-amino-acid polypeptide reads, in one-letter code: Photosystem I assembly protein Ycf4 (188 aa).

2 consecutive transmembrane segments (helical) span residues 22–42 (LGWASVLLLGTSGFLLTGLSS) and 68–88 (LVMCFYGIAGLFLSTYLWCAI).

Belongs to the Ycf4 family.

It localises to the plastid. The protein resides in the chloroplast thylakoid membrane. Its function is as follows. Seems to be required for the assembly of the photosystem I complex. This Zygnema circumcarinatum (Green alga) protein is Photosystem I assembly protein Ycf4.